The sequence spans 525 residues: MTHDIHAQRILILDFGSQYTQLIARRVREIGVFSEIRAWDMSDDEIRAYKPSGIILAGGPESTTEEEAPRAPEAVFALGVPVLGICYGMQTMAMQMGGWVESSAIREFGYAQIKAHGQSSLLQDIKDHVDQDGSALLDVWMSHGDKVTKMPEGFELMASTPSCPIAGMYNEAKKFYGVQFHPEVTHTLQGKRLFEHFVLQLCACEKLWTPANIVEDAIKKVREQVGTDKVLLGLSGGVDSSVVAALLHRAIGDQLTCVFVDNGLLRKNEGDQVMDMFAKNMGVRVIRADAEQLFLGKLAGVSDPEKKRKIIGGTFIDVFDTEATKLQEVKWLAQGTIYPDVIESAAAKTGKAHVIKSHHNVGGLPEDMAFKLVEPLRELFKDEVRAIGLELGLPYDMVYRHPFPGPGLGVRILGEVKKEYADILREADAIFLEELRAADWYHKTSQAFAVFLPVKSVGVVGDGRRYEWVISLRAVETVDFMTARWAHLPYELLEKVSNRIINEISGVSRVCYDVSSKPPATIEWE.

The Glutamine amidotransferase type-1 domain maps to Arg9–Leu207. Cys86 serves as the catalytic Nucleophile. Active-site residues include His181 and Glu183. One can recognise a GMPS ATP-PPase domain in the interval Trp208–Arg400. An ATP-binding site is contributed by Ser235–Ser241.

As to quaternary structure, homodimer.

The enzyme catalyses XMP + L-glutamine + ATP + H2O = GMP + L-glutamate + AMP + diphosphate + 2 H(+). It participates in purine metabolism; GMP biosynthesis; GMP from XMP (L-Gln route): step 1/1. Its function is as follows. Catalyzes the synthesis of GMP from XMP. The protein is GMP synthase [glutamine-hydrolyzing] of Cellvibrio japonicus (strain Ueda107) (Pseudomonas fluorescens subsp. cellulosa).